The primary structure comprises 615 residues: Elongation factor 4 (615 aa).

The tr-type G domain maps to 14-196 (AMIRNFCIIA…EIVRQVPAPV (183 aa)). Residues 26-31 (DHGKST) and 143-146 (NKID) contribute to the GTP site.

The protein belongs to the TRAFAC class translation factor GTPase superfamily. Classic translation factor GTPase family. LepA subfamily.

It localises to the cell membrane. It catalyses the reaction GTP + H2O = GDP + phosphate + H(+). Functionally, required for accurate and efficient protein synthesis under certain stress conditions. May act as a fidelity factor of the translation reaction, by catalyzing a one-codon backward translocation of tRNAs on improperly translocated ribosomes. Back-translocation proceeds from a post-translocation (POST) complex to a pre-translocation (PRE) complex, thus giving elongation factor G a second chance to translocate the tRNAs correctly. Binds to ribosomes in a GTP-dependent manner. This Frankia alni (strain DSM 45986 / CECT 9034 / ACN14a) protein is Elongation factor 4.